Reading from the N-terminus, the 208-residue chain is Small ribosomal subunit protein uS4 (208 aa).

Residues Arg98–Asn159 enclose the S4 RNA-binding domain.

It belongs to the universal ribosomal protein uS4 family. In terms of assembly, part of the 30S ribosomal subunit. Contacts protein S5. The interaction surface between S4 and S5 is involved in control of translational fidelity.

Its function is as follows. One of the primary rRNA binding proteins, it binds directly to 16S rRNA where it nucleates assembly of the body of the 30S subunit. With S5 and S12 plays an important role in translational accuracy. The polypeptide is Small ribosomal subunit protein uS4 (Desulfatibacillum aliphaticivorans).